We begin with the raw amino-acid sequence, 170 residues long: Mediator of RNA polymerase II transcription subunit 10 (170 aa).

Belongs to the Mediator complex subunit 10 family. Component of the Mediator complex.

It is found in the nucleus. In terms of biological role, component of the Mediator complex, a coactivator involved in the regulated transcription of nearly all RNA polymerase II-dependent genes. Mediator functions as a bridge to convey information from gene-specific regulatory proteins to the basal RNA polymerase II transcription machinery. Mediator is recruited to promoters by direct interactions with regulatory proteins and serves as a scaffold for the assembly of a functional preinitiation complex with RNA polymerase II and the general transcription factors. The chain is Mediator of RNA polymerase II transcription subunit 10 (NUT2) from Candida albicans (strain SC5314 / ATCC MYA-2876) (Yeast).